Reading from the N-terminus, the 401-residue chain is Formate dehydrogenase (401 aa).

2 residues coordinate substrate: I123 and N147. Residues S148, 202 to 203 (RI), D222, 257 to 261 (PLHPE), T283, D309, 333 to 336 (HISG), and S381 each bind NAD(+).

It belongs to the D-isomer specific 2-hydroxyacid dehydrogenase family. FDH subfamily. In terms of assembly, homodimer.

Its subcellular location is the cytoplasm. It carries out the reaction formate + NAD(+) = CO2 + NADH. Its function is as follows. Catalyzes the NAD(+)-dependent oxidation of formate to carbon dioxide. Formate oxidation is the final step in the methanol oxidation pathway in methylotrophic microorganisms. Has a role in the detoxification of exogenous formate in non-methylotrophic organisms. The sequence is that of Formate dehydrogenase from Pseudomonas sp. (strain 101) (Achromobacter parvulus T1).